A 339-amino-acid chain; its full sequence is 2-oxoisovalerate dehydrogenase subunit beta (339 aa).

Heterodimer of an alpha and a beta chain. The cofactor is thiamine diphosphate.

It catalyses the reaction N(6)-[(R)-lipoyl]-L-lysyl-[protein] + 3-methyl-2-oxobutanoate + H(+) = N(6)-[(R)-S(8)-2-methylpropanoyldihydrolipoyl]-L-lysyl-[protein] + CO2. The branched-chain alpha-keto dehydrogenase complex catalyzes the overall conversion of alpha-keto acids to acyl-CoA and CO(2). It contains multiple copies of three enzymatic components: branched-chain alpha-keto acid decarboxylase (E1), lipoamide acyltransferase (E2) and lipoamide dehydrogenase (E3). In Pseudomonas putida (Arthrobacter siderocapsulatus), this protein is 2-oxoisovalerate dehydrogenase subunit beta (bkdA2).